The chain runs to 185 residues: Hypoxanthine/guanine phosphoribosyltransferase (185 aa).

This sequence belongs to the purine/pyrimidine phosphoribosyltransferase family. Archaeal HPRT subfamily. As to quaternary structure, homodimer.

The protein resides in the cytoplasm. The catalysed reaction is IMP + diphosphate = hypoxanthine + 5-phospho-alpha-D-ribose 1-diphosphate. It carries out the reaction GMP + diphosphate = guanine + 5-phospho-alpha-D-ribose 1-diphosphate. It functions in the pathway purine metabolism; IMP biosynthesis via salvage pathway; IMP from hypoxanthine: step 1/1. In terms of biological role, catalyzes a salvage reaction resulting in the formation of IMP that is energically less costly than de novo synthesis. The chain is Hypoxanthine/guanine phosphoribosyltransferase (hpt) from Methanococcus maripaludis (strain DSM 14266 / JCM 13030 / NBRC 101832 / S2 / LL).